The following is a 624-amino-acid chain: Kelch-like protein diablo (624 aa).

The segment covering 1 to 21 (MGDPLLPGSTGLGSGPAAAAT) has biased composition (low complexity). The segment at 1-55 (MGDPLLPGSTGLGSGPAAAATGGSGTTGTGLGSGGTSGAERPPSPARLTHTSEKH) is disordered. Residues 22–37 (GGSGTTGTGLGSGGTS) are compositionally biased toward gly residues. A BTB domain is found at 73 to 140 (CDVVLNVGGR…CYTAHIIVEE (68 aa)). The region spanning 175–277 (CLGIRAFADT…SPKFLVGTVG (103 aa)) is the BACK domain. Kelch repeat units follow at residues 324–370 (VLFA…VLND), 372–418 (LYAV…VLDG), 419–465 (FLYA…VLSG), 467–512 (LYAI…VFNN), 514–559 (IYAV…VVNG), and 560–606 (QLYA…VMRA).

It functions in the pathway protein modification; protein ubiquitination. Probable substrate-specific adapter of an E3 ubiquitin-protein ligase complex which mediates the ubiquitination and subsequent proteasomal degradation of target proteins. May have a role in synapse differentiation and growth. This Drosophila virilis (Fruit fly) protein is Kelch-like protein diablo.